Consider the following 94-residue polypeptide: uncharacterized protein (94 aa).

The disordered stretch occupies residues Met1–Thr22. A coiled-coil region spans residues Met1 to Leu77.

This is an uncharacterized protein from Acheta domesticus (House cricket).